The primary structure comprises 850 residues: DEAD-box ATP-dependent RNA helicase 26 (850 aa).

Disordered stretches follow at residues 60-82 (TRPERSQPEFARRSGAGGEIRAS) and 106-350 (GKFT…ENDE). Basic and acidic residues predominate over residues 61 to 71 (RPERSQPEFAR). A Phosphothreonine modification is found at Thr109. Ser110 carries the phosphoserine modification. Basic and acidic residues-rich tracts occupy residues 118–140 (EVVRRNVDRDTSRGPRRGREGQS) and 284–299 (GRNDRNVESGFRREPG). Acidic residues-rich tracts occupy residues 315–325 (LEEEDSSDDDE) and 336–350 (LPSEDSSDEDDENDE). Residues 382-410 (TRFDQFPLSPLSLKAIKDAGFETMTVVQE) carry the Q motif motif. The 184-residue stretch at 413 to 596 (LPIILQGKDV…HVALKRDHEF (184 aa)) folds into the Helicase ATP-binding domain. 426-433 (AKTGTGKT) is a binding site for ATP. Residues 544-547 (DEAD) carry the DEAD box motif. In terms of domain architecture, Helicase C-terminal spans 630–777 (LLKEHIADNV…IDPEAVKRVQ (148 aa)).

The protein belongs to the DEAD box helicase family.

The catalysed reaction is ATP + H2O = ADP + phosphate + H(+). This Arabidopsis thaliana (Mouse-ear cress) protein is DEAD-box ATP-dependent RNA helicase 26 (RH26).